A 238-amino-acid chain; its full sequence is Uridylate kinase (238 aa).

10 to 13 is a binding site for ATP; it reads KFSG. The interval 18–23 is involved in allosteric activation by GTP; sequence GENGFG. UMP is bound at residue G52. ATP is bound by residues G53 and R57. Residues D73 and 134 to 141 each bind UMP; that span reads TGNPFFTT. 3 residues coordinate ATP: T161, Y167, and D170.

The protein belongs to the UMP kinase family. As to quaternary structure, homohexamer.

The protein resides in the cytoplasm. It carries out the reaction UMP + ATP = UDP + ADP. It functions in the pathway pyrimidine metabolism; CTP biosynthesis via de novo pathway; UDP from UMP (UMPK route): step 1/1. With respect to regulation, allosterically activated by GTP. Inhibited by UTP. Its function is as follows. Catalyzes the reversible phosphorylation of UMP to UDP. The polypeptide is Uridylate kinase (Campylobacter concisus (strain 13826)).